The primary structure comprises 292 residues: Acetylglutamate kinase (292 aa).

Residues 72-73, Arg-94, and Asn-187 contribute to the substrate site; that span reads GG.

The protein belongs to the acetylglutamate kinase family. ArgB subfamily.

It localises to the cytoplasm. The enzyme catalyses N-acetyl-L-glutamate + ATP = N-acetyl-L-glutamyl 5-phosphate + ADP. Its pathway is amino-acid biosynthesis; L-arginine biosynthesis; N(2)-acetyl-L-ornithine from L-glutamate: step 2/4. Its function is as follows. Catalyzes the ATP-dependent phosphorylation of N-acetyl-L-glutamate. The chain is Acetylglutamate kinase from Trichodesmium erythraeum (strain IMS101).